Reading from the N-terminus, the 277-residue chain is MLKMMGQMVITLREGFEAALLVAVLVAYLKRSGRTEEVRFAYYGTIAAIAAGFAIATAVIVAYGGLHGEQKELFEGFASYLAVGVLTYMILWMAGKDVRGEVERRAEAKFKWGIALIAFVFVVREVIETVLFLTPFAIAEFTTTVIGASAGAAVAITLAVLILRFEYRMSLRRFFYATSVLLAFIAAGLLGYGTHEFVEVLEEEGFEHPLFEKAYSLGIDESNPLHHKGLIGGILAVMFGYSASMEWVRLILQLGYLAAMLGLIHRSYGRVTERAEV.

A run of 5 helical transmembrane segments spans residues 46-66 (IAAI…YGGL), 73-93 (LFEG…ILWM), 143-163 (TTVI…VLIL), 174-194 (FFYA…GYGT), and 228-248 (KGLI…MEWV).

The protein belongs to the oxidase-dependent Fe transporter (OFeT) (TC 9.A.10.1) family.

The protein resides in the cell membrane. This is an uncharacterized protein from Archaeoglobus fulgidus (strain ATCC 49558 / DSM 4304 / JCM 9628 / NBRC 100126 / VC-16).